The chain runs to 234 residues: Nuclear transcription factor Y subunit B-6 (234 aa).

Disordered regions lie at residues 1–21 (MERGGFHGYRKLSVNNTTPSP) and 35–55 (MRPPEFNQPNKTSNGGEEECT). A DNA-binding region spans residues 63–69 (MPIANVI). The interval 90-101 (IQECVSEYISFI) is subunit association domain (SAD). Positions 206-234 (NEPNSKMSGSSSGASGARVEVFPTQQHKY) are disordered. Residues 213–222 (SGSSSGASGA) show a composition bias toward low complexity.

This sequence belongs to the NFYB/HAP3 subunit family. Heterotrimeric transcription factor composed of three components, NF-YA, NF-YB and NF-YC. NF-YB and NF-YC must interact and dimerize for NF-YA association and DNA binding. Interacts with PRN1. Binds directly with DPB3-1. As to expression, expressed in roots, flowers and developing siliques. Present in etiolated seedlings.

It localises to the nucleus. Functionally, component of the NF-Y/HAP transcription factor complex. The NF-Y complex stimulates the transcription of various genes by recognizing and binding to a CCAAT motif in promoters. Plays a role in the regulation of the embryogenesis. Involved in the abscisic acid (ABA) signaling pathway. This Arabidopsis thaliana (Mouse-ear cress) protein is Nuclear transcription factor Y subunit B-6.